The primary structure comprises 246 residues: 1-(5-phosphoribosyl)-5-[(5-phosphoribosylamino)methylideneamino] imidazole-4-carboxamide isomerase (246 aa).

The active-site Proton acceptor is the aspartate 7. The active-site Proton donor is the aspartate 129.

Belongs to the HisA/HisF family.

The protein resides in the cytoplasm. The catalysed reaction is 1-(5-phospho-beta-D-ribosyl)-5-[(5-phospho-beta-D-ribosylamino)methylideneamino]imidazole-4-carboxamide = 5-[(5-phospho-1-deoxy-D-ribulos-1-ylimino)methylamino]-1-(5-phospho-beta-D-ribosyl)imidazole-4-carboxamide. Its pathway is amino-acid biosynthesis; L-histidine biosynthesis; L-histidine from 5-phospho-alpha-D-ribose 1-diphosphate: step 4/9. This chain is 1-(5-phosphoribosyl)-5-[(5-phosphoribosylamino)methylideneamino] imidazole-4-carboxamide isomerase, found in Buchnera aphidicola subsp. Acyrthosiphon pisum (strain Tuc7).